The primary structure comprises 635 residues: Histone-lysine N-methyltransferase Su(var)3-9 (635 aa).

The binds to Su(var)205 and Suvar(3)7 stretch occupies residues 81–188 (ERLSEKKIKN…LNGFAKLKRR (108 aa)). 2 disordered regions span residues 123-161 (RLCT…NSSG) and 191-210 (SCVG…MGVI). Composition is skewed to low complexity over residues 128-139 (PASSSMPASTSS) and 147-161 (RSTS…NSSG). The region spanning 219–278 (YVVERIECVEMDQYQPVFFVKWLGYHDSENTWESLANVADCAEMEKFVERHQQLYETYIA) is the Chromo domain. A Pre-SET domain is found at 410-474 (VGCKCTEDTE…SCSNRLVQHG (65 aa)). Zn(2+)-binding residues include Cys412, Cys414, Cys421, Cys427, Cys428, Cys456, Cys460, Cys462, and Cys466. The SET domain occupies 477-603 (VPLVLFKTAN…AGEELSFDYI (127 aa)). S-adenosyl-L-methionine is bound by residues 488-490 (SGW), Tyr531, and 560-561 (NH). 4 residues coordinate Zn(2+): Cys563, Cys623, Cys625, and Cys630. The 17-residue stretch at 619 to 635 (VRVECRCGRDNCRKVLF) folds into the Post-SET domain.

This sequence belongs to the class V-like SAM-binding methyltransferase superfamily. Histone-lysine methyltransferase family. Suvar3-9 subfamily. Interacts with Su(var)205 and Su(var)3-7. Probably associates with HDAC1/Rpd3. Interacts with Rrp6; the interaction promotes association of Rrp6 with a subset of genomic loci.

It is found in the nucleus. The protein localises to the chromosome. Its subcellular location is the centromere. It carries out the reaction L-lysyl(9)-[histone H3] + 3 S-adenosyl-L-methionine = N(6),N(6),N(6)-trimethyl-L-lysyl(9)-[histone H3] + 3 S-adenosyl-L-homocysteine + 3 H(+). Histone methyltransferase that specifically trimethylates 'Lys-9' of histone H3 using monomethylated H3 'Lys-9' as substrate. H3 'Lys-9' trimethylation represents a specific tag for epigenetic transcriptional repression by recruiting Su(var)205/HP1 to methylated histones. Mainly functions in heterochromatin regions, thereby playing a central role in the establishment of constitutive heterochromatin at pericentric regions. Involved in heterochromatic gene silencing including the modification of position-effect-variegation. This chain is Histone-lysine N-methyltransferase Su(var)3-9 (Su(var)3-9), found in Drosophila melanogaster (Fruit fly).